Consider the following 1031-residue polypeptide: Receptor-like protein EIX1 (1031 aa).

The first 29 residues, 1-29, serve as a signal peptide directing secretion; that stretch reads MDKWKYARLAQFLFTLSLLFLETSFGLGG. Asn30 is a glycosylation site (N-linked (GlcNAc...) asparagine). An N-cap region spans residues 30–113; sequence NKTLCLDKER…PRLTGKLSPS (84 aa). Residues 30-971 lie on the Extracellular side of the membrane; sequence NKTLCLDKER…DEEEEFPSLE (942 aa). One copy of the LRR 1 repeat lies at 117 to 140; it reads LEYLNYLDLSVNEFERSEIPRFIG. Residues 142-165 form an LRR 2; degenerate repeat; that stretch reads LKRLEYLNLSASFFSGVIPIQFQN. 2 N-linked (GlcNAc...) asparagine glycosylation sites follow: Asn149 and Asn165. LRR repeat units follow at residues 166–189, 191–215, 216–240, and 243–266; these read LTSLRTLDLGENNLIVKDLRWLSH, SSLEFLSLSSSNFQVNNWFQEITKV, PSLKELDLSGCGLSKLVPSQADLAN, and LISLSVLHLCCNEFSSSSEYSWVF. Asn240 is a glycosylation site (N-linked (GlcNAc...) asparagine). The N-linked (GlcNAc...) asparagine glycan is linked to Asn267. LRR repeat units lie at residues 269-292, 293-317, 318-341, 346-369, 370-393, 394-416, 417-440, 441-463, 465-487, 488-509, 512-536, 538-559, 561-584, and 586-611; these read TTSLTSIDLLYNQLSGQIDDRFGT, LMYLEHLDLANNLKIEGGVPSSFGN, LTRLRHLDMSNTQTVQWLPELFLR, RKSLEVLGLNENSLFGSIVNATRF, SSLKKLYLQKNMLNGSFMESAGQV, STLEYLDLSENQMRGALPDLALF, PSLRELHLGSNQFRGRIPQGIGKL, SQLRILDVSSNRLEGLPESMGQL, NLESFDASYNVLKGTITESHLSN, LSSLVDLDLSFNSLALKTSFNW, PFQLQVISLPSCNLGPSFPKWLQNQ, NYTVLDISLASISDTLPSWFSS, PPDLKILNLSNNQISGRVSDLIEN, and YGYRVIDLSYNNFSGALPLVPTNVQI. The N-linked (GlcNAc...) asparagine glycan is linked to Asn317. Asn365 and Asn383 each carry an N-linked (GlcNAc...) asparagine glycan. N-linked (GlcNAc...) asparagine glycosylation occurs at Asn487. N-linked (GlcNAc...) asparagine glycans are attached at residues Asn538, Asn568, and Asn597. Residues 612–629 form an LRR 21; degenerate repeat; the sequence is FYLHKNQFFGSISSICRS. 6 LRR repeats span residues 630-654, 655-678, 679-703, 705-725, 726-750, and 752-773; these read RTSPTSLDLSHNQFSGELPDCWMNM, TSLAVLNLAYNNFSGEIPHSLGSL, TNLKALYIRQNSLSGMLPSFSQCQG, QILDLGGNKLTGSIPGWIGTD, LLNLRILSLRFNRLHGSIPSIICQL, and FLQILDLSANGLSGKIPHCFNN. N-linked (GlcNAc...) asparagine glycosylation is found at Asn653 and Asn666. N-linked (GlcNAc...) asparagine glycans are attached at residues Asn773 and Asn781. LRR repeat units follow at residues 823–847, 848–871, 872–895, and 896–918; these read LLYLKTIDLSSNELIGGVPKEIADM, RGLKSLNLSRNELNGTVIEGIGQM, RMLESLDMSRNQLSGVIPQDLANL, and TFLSVLDLSNNQLSGRIPSSTQL. N-linked (GlcNAc...) asparagine glycans are attached at residues Asn854, Asn861, and Asn894. The tract at residues 919-971 is C-cap/acidic domain; the sequence is QSFDRSSYSDNAQLCGPPLQECPGYAPPSPLIDHGSNNNPQEHDEEEEFPSLE. A helical transmembrane segment spans residues 972-992; it reads FYISMVLSFFVAFWGILGCLI. At 993 to 1031 the chain is on the cytoplasmic side; it reads VNSSWRNAYFKFLTDTTSWLDMISRVWFARLKKKLRRAR.

The protein belongs to the RLP family. Interacts with EIX elicitor protein.

The protein localises to the cell membrane. Functionally, involved in plant defense. Confers resistance to the fungal pathogen T.viride through recognition of the EIX elicitor protein. The protein is Receptor-like protein EIX1 of Solanum lycopersicum (Tomato).